Reading from the N-terminus, the 398-residue chain is Chalcone synthase (398 aa).

The active site involves Cys169.

Belongs to the thiolase-like superfamily. Chalcone/stilbene synthases family.

The catalysed reaction is (E)-4-coumaroyl-CoA + 3 malonyl-CoA + 3 H(+) = 2',4,4',6'-tetrahydroxychalcone + 3 CO2 + 4 CoA. Its pathway is secondary metabolite biosynthesis; flavonoid biosynthesis. The primary product of this enzyme is 4,2',4',6'-tetrahydroxychalcone (also termed naringenin-chalcone or chalcone) which can under specific conditions spontaneously isomerize into naringenin. The chain is Chalcone synthase (CHS) from Petroselinum crispum (Parsley).